Reading from the N-terminus, the 206-residue chain is Imidazoleglycerol-phosphate dehydratase (206 aa).

Belongs to the imidazoleglycerol-phosphate dehydratase family.

The protein resides in the cytoplasm. It carries out the reaction D-erythro-1-(imidazol-4-yl)glycerol 3-phosphate = 3-(imidazol-4-yl)-2-oxopropyl phosphate + H2O. It participates in amino-acid biosynthesis; L-histidine biosynthesis; L-histidine from 5-phospho-alpha-D-ribose 1-diphosphate: step 6/9. This is Imidazoleglycerol-phosphate dehydratase from Synechococcus sp. (strain JA-3-3Ab) (Cyanobacteria bacterium Yellowstone A-Prime).